A 599-amino-acid chain; its full sequence is Elongation factor 4 (599 aa).

A tr-type G domain is found at 4-186 (ENIRNFSIIA…EIVTKIPPPQ (183 aa)). GTP is bound by residues 16–21 (DHGKST) and 133–136 (NKID).

This sequence belongs to the TRAFAC class translation factor GTPase superfamily. Classic translation factor GTPase family. LepA subfamily.

It is found in the cell inner membrane. It catalyses the reaction GTP + H2O = GDP + phosphate + H(+). Required for accurate and efficient protein synthesis under certain stress conditions. May act as a fidelity factor of the translation reaction, by catalyzing a one-codon backward translocation of tRNAs on improperly translocated ribosomes. Back-translocation proceeds from a post-translocation (POST) complex to a pre-translocation (PRE) complex, thus giving elongation factor G a second chance to translocate the tRNAs correctly. Binds to ribosomes in a GTP-dependent manner. This chain is Elongation factor 4, found in Geotalea uraniireducens (strain Rf4) (Geobacter uraniireducens).